The sequence spans 940 residues: Mitogen-activated protein kinase kinase kinase 10 (940 aa).

Positions 16 to 81 (PAGPVWTAVF…PSNYVAPAAP (66 aa)) constitute an SH3 domain. Residues 98 to 360 (LQLEEIIGVG…GSILKQLEVI (263 aa)) form the Protein kinase domain. ATP is bound by residues 104 to 112 (IGVGGFGKV) and lysine 125. The Proton acceptor role is filled by aspartate 222. The residue at position 258 (threonine 258) is a Phosphothreonine; by autocatalysis. At serine 262 the chain carries Phosphoserine; by autocatalysis and MAP4K1. 2 leucine-zipper regions span residues 384-405 (IQHM…EEEL) and 419-440 (LRRR…ELHL). Disordered regions lie at residues 490–599 (PTLD…MAPG), 687–734 (RAGD…GLAP), and 749–917 (STRS…QPTL). Phosphoserine is present on residues serine 498, serine 502, and serine 506. The span at 501 to 511 (ASPPASPSIIP) shows a compositional bias: low complexity. Phosphothreonine is present on threonine 552. 2 stretches are compositionally biased toward basic and acidic residues: residues 560–572 (QKER…RLKA) and 687–698 (RAGDGEEQRRWL). Residues 765-775 (APSPPPSPLAP) show a composition bias toward pro residues. The span at 822 to 840 (LRQREPLELTNHGPRDPLD) shows a compositional bias: basic and acidic residues. Omega-N-methylarginine is present on arginine 843. Residues 899–913 (PSRPDTPESPGPPSV) are compositionally biased toward pro residues.

This sequence belongs to the protein kinase superfamily. STE Ser/Thr protein kinase family. MAP kinase kinase kinase subfamily. Homodimer. Interacts with SH3RF2. It depends on Mg(2+) as a cofactor. In terms of processing, autophosphorylation on serine and threonine residues within the activation loop plays a role in enzyme activation.

The enzyme catalyses L-seryl-[protein] + ATP = O-phospho-L-seryl-[protein] + ADP + H(+). The catalysed reaction is L-threonyl-[protein] + ATP = O-phospho-L-threonyl-[protein] + ADP + H(+). Homodimerization via the leucine zipper domains is required for autophosphorylation and subsequent activation. In terms of biological role, activates the JUN N-terminal pathway. This Mus musculus (Mouse) protein is Mitogen-activated protein kinase kinase kinase 10 (Map3k10).